Consider the following 484-residue polypeptide: tRNA-2-methylthio-N(6)-dimethylallyladenosine synthase (484 aa).

The MTTase N-terminal domain maps to 29-149; it reads GVFHIHTLGC…LPKLLDQNRA (121 aa). Residues Cys38, Cys78, Cys112, Cys186, Cys190, and Cys193 each contribute to the [4Fe-4S] cluster site. Positions 172 to 401 constitute a Radical SAM core domain; sequence RASRISSWVA…VALQEQITEE (230 aa). A TRAM domain is found at 404 to 474; it reads ATFEGRDVEV…RHNLLADPDV (71 aa).

This sequence belongs to the methylthiotransferase family. MiaB subfamily. As to quaternary structure, monomer. The cofactor is [4Fe-4S] cluster.

The protein localises to the cytoplasm. The catalysed reaction is N(6)-dimethylallyladenosine(37) in tRNA + (sulfur carrier)-SH + AH2 + 2 S-adenosyl-L-methionine = 2-methylsulfanyl-N(6)-dimethylallyladenosine(37) in tRNA + (sulfur carrier)-H + 5'-deoxyadenosine + L-methionine + A + S-adenosyl-L-homocysteine + 2 H(+). Functionally, catalyzes the methylthiolation of N6-(dimethylallyl)adenosine (i(6)A), leading to the formation of 2-methylthio-N6-(dimethylallyl)adenosine (ms(2)i(6)A) at position 37 in tRNAs that read codons beginning with uridine. The polypeptide is tRNA-2-methylthio-N(6)-dimethylallyladenosine synthase (Bifidobacterium longum (strain DJO10A)).